Consider the following 207-residue polypeptide: Guanylate kinase (207 aa).

Residues 4-184 form the Guanylate kinase-like domain; that stretch reads GTLYIVSAPS…ALMDFKAIIR (181 aa). Residue 11–18 participates in ATP binding; that stretch reads APSGAGKS.

This sequence belongs to the guanylate kinase family.

It localises to the cytoplasm. It catalyses the reaction GMP + ATP = GDP + ADP. Essential for recycling GMP and indirectly, cGMP. The sequence is that of Guanylate kinase from Vibrio vulnificus (strain CMCP6).